The sequence spans 251 residues: Insulin-induced gene 1 protein (251 aa).

At 1–58 (MPRLEEHCWSCSCSTSVKTKDLSSAGWIVCKTGEMMSIITSVLSHAYGSLHSLQSANL) the chain is on the cytoplasmic side. Residues 59–81 (IRRGLVLFIVGVVLALVLNLLQI) traverse the membrane as a helical segment. Topologically, residues 82 to 100 (QRNVTLFPEEVLDTLFSSA) are extracellular. A helical transmembrane segment spans residues 101 to 118 (WWIPLCCGTAAAVVGLLY). The Cytoplasmic portion of the chain corresponds to 119–133 (PCLDHHLGEPHKFKR). Residues 134–156 (EWASVMRCIAVFVGINHASAKLD) traverse the membrane as a helical segment. Topologically, residues 157-159 (FAN) are extracellular. The helical transmembrane segment at 160-178 (NVQLSLTLAALSLGLWWTF) threads the bilayer. Residues 179 to 183 (DRSRS) lie on the Cytoplasmic side of the membrane. A helical transmembrane segment spans residues 184–205 (GFGLGLTTALLATLIAQLLVYN). At 206-219 (GIYQYTSPDFLYVR) the chain is on the extracellular side. Residues 220-237 (SWLPCIFFSGGVTVGNIG) traverse the membrane as a helical segment. At 238–251 (RQLAMGSTEKIHND) the chain is on the cytoplasmic side. Positions 245-251 (TEKIHND) match the KxHxx motif.

This sequence belongs to the INSIG family. In terms of assembly, interacts with scap; interaction is direct and only takes place in the presence of sterols; it prevents interaction between scap and the coat protein complex II (COPII). Associates with the SCAP-SREBP complex; association is mediated via its interaction with scap and only takes place in the presence of sterols.

It localises to the endoplasmic reticulum membrane. Functionally, oxysterol-binding protein that mediates feedback control of cholesterol synthesis by controlling both endoplasmic reticulum to Golgi transport of scap and degradation of hmgcr. Acts as a negative regulator of cholesterol biosynthesis by mediating the retention of the SCAP-SREBP complex in the endoplasmic reticulum, thereby blocking the processing of sterol regulatory element-binding proteins (SREBPs). Binds oxysterol, including 25-hydroxycholesterol, regulating interaction with scap and retention of the SCAP-SREBP complex in the endoplasmic reticulum. In presence of oxysterol, interacts with scap, retaining the SCAP-SREBP complex in the endoplasmic reticulum, thereby preventing scap from escorting SREBPs to the Golgi. Sterol deprivation reduces oxysterol-binding, disrupting the interaction between insig1 and scap, thereby promoting Golgi transport of the SCAP-SREBP complex, followed by processing and nuclear translocation of SREBPs. Also regulates cholesterol synthesis by regulating degradation of hmgcr. In Danio rerio (Zebrafish), this protein is Insulin-induced gene 1 protein.